A 111-amino-acid chain; its full sequence is Large ribosomal subunit protein uL22 (111 aa).

The protein belongs to the universal ribosomal protein uL22 family. As to quaternary structure, part of the 50S ribosomal subunit.

Functionally, this protein binds specifically to 23S rRNA; its binding is stimulated by other ribosomal proteins, e.g. L4, L17, and L20. It is important during the early stages of 50S assembly. It makes multiple contacts with different domains of the 23S rRNA in the assembled 50S subunit and ribosome. Its function is as follows. The globular domain of the protein is located near the polypeptide exit tunnel on the outside of the subunit, while an extended beta-hairpin is found that lines the wall of the exit tunnel in the center of the 70S ribosome. The sequence is that of Large ribosomal subunit protein uL22 from Geotalea uraniireducens (strain Rf4) (Geobacter uraniireducens).